The sequence spans 203 residues: Guanylate kinase (203 aa).

The Guanylate kinase-like domain occupies 3 to 181 (GTLYVVSAPS…TLADLQAIFT (179 aa)). ATP is bound at residue 10 to 17 (APSGAGKT).

This sequence belongs to the guanylate kinase family.

Its subcellular location is the cytoplasm. It catalyses the reaction GMP + ATP = GDP + ADP. Essential for recycling GMP and indirectly, cGMP. The chain is Guanylate kinase from Alkalilimnicola ehrlichii (strain ATCC BAA-1101 / DSM 17681 / MLHE-1).